A 396-amino-acid chain; its full sequence is Elongation factor Tu (396 aa).

The 197-residue stretch at 10–206 (KPHCNIGTIG…QVDAYIPQPE (197 aa)) folds into the tr-type G domain. The tract at residues 19 to 26 (GHVDHGKT) is G1. 19–26 (GHVDHGKT) serves as a coordination point for GTP. Position 26 (Thr-26) interacts with Mg(2+). The G2 stretch occupies residues 60–64 (GITIS). Residues 81-84 (DCPG) form a G3 region. GTP-binding positions include 81-85 (DCPGH) and 136-139 (NKVD). The G4 stretch occupies residues 136-139 (NKVD). Residues 174–176 (SAL) are G5.

The protein belongs to the TRAFAC class translation factor GTPase superfamily. Classic translation factor GTPase family. EF-Tu/EF-1A subfamily. As to quaternary structure, monomer.

The protein resides in the cytoplasm. It catalyses the reaction GTP + H2O = GDP + phosphate + H(+). Its function is as follows. GTP hydrolase that promotes the GTP-dependent binding of aminoacyl-tRNA to the A-site of ribosomes during protein biosynthesis. This is Elongation factor Tu from Gluconobacter oxydans (strain 621H) (Gluconobacter suboxydans).